The following is a 374-amino-acid chain: Putative glutamate--cysteine ligase 2-2 (374 aa).

The protein belongs to the glutamate--cysteine ligase type 2 family. YbdK subfamily.

It carries out the reaction L-cysteine + L-glutamate + ATP = gamma-L-glutamyl-L-cysteine + ADP + phosphate + H(+). Its function is as follows. ATP-dependent carboxylate-amine ligase which exhibits weak glutamate--cysteine ligase activity. The sequence is that of Putative glutamate--cysteine ligase 2-2 from Rhodococcus jostii (strain RHA1).